The following is a 234-amino-acid chain: GTP cyclohydrolase 1 (234 aa).

The interval 1-26 (MDALIKPLRAGKPDAKPADPKGTEFR) is disordered. Basic and acidic residues predominate over residues 11–26 (GKPDAKPADPKGTEFR). Positions 123, 126, and 194 each coordinate Zn(2+).

This sequence belongs to the GTP cyclohydrolase I family. In terms of assembly, toroid-shaped homodecamer, composed of two pentamers of five dimers.

The catalysed reaction is GTP + H2O = 7,8-dihydroneopterin 3'-triphosphate + formate + H(+). Its pathway is cofactor biosynthesis; 7,8-dihydroneopterin triphosphate biosynthesis; 7,8-dihydroneopterin triphosphate from GTP: step 1/1. This is GTP cyclohydrolase 1 from Rhodopseudomonas palustris (strain BisB18).